Reading from the N-terminus, the 746-residue chain is EF-hand domain-containing family member C2 (746 aa).

DM10 domains are found at residues 75–182, 226–367, and 429–536; these read DKQV…RKMG, DGHV…RTKY, and ESNT…EKHA. The 36-residue stretch at 557-592 folds into the EF-hand domain; the sequence is PRSREIRQVFAAADPQHTKVIEYDPFRNLIVSITDG.

The protein resides in the cytoplasm. The protein localises to the cytoskeleton. It is found in the cilium axoneme. In terms of biological role, microtubule inner protein (MIP) part of the dynein-decorated doublet microtubules (DMTs) in cilia axoneme, which is required for motile cilia beating. The chain is EF-hand domain-containing family member C2 (EFHC2) from Gallus gallus (Chicken).